A 1769-amino-acid chain; its full sequence is Gamma-tubulin complex component 6 (1769 aa).

Disordered regions lie at residues 809–842 (EAQQ…HSCD), 859–881 (STPS…PFST), and 1284–1360 (TVCS…AEAR). Over residues 820 to 831 (FPSTGSQVTSTG) the composition is skewed to polar residues. Positions 1314-1326 (PEEKGPGKSRDAE) are enriched in basic and acidic residues. Over residues 1332 to 1343 (LPSSSQEDTAVP) the composition is skewed to polar residues.

This sequence belongs to the TUBGCP family. As to quaternary structure, component of the gamma-tubulin ring complex (gTuRC) consisting of TUBGCP2, TUBGCP3, TUBGCP4, TUBGCP5 and TUBGCP6 and gamma-tubulin TUBG1 or TUBG2. TUBGCP2, TUBGCP3, TUBGCP4, TUBGCP5 and TUBGCP6 assemble in a 5:5:2:1:1 stoichiometry; each is associated with a gamma-tubulin, thereby arranging 14 gamma-tubulins in a helical manner. Gamma-tubulin at the first position is blocked by TUBGCP3 at the last position, allowing 13 protafilaments to grow into a microtubule. The gTuRC (via TUBGCP3 and TUBGCP6) interacts with ACTB and MZT1; the interactions form a luminal bridge that stabilizes the initial structure during complex assembly. The gTuRC (via TUBGCP2) interacts with MZT2A/MZT2B and CDK5RAP2 (via CM1 motif); the interactions play a role in gTuRC activation.

Its subcellular location is the cytoplasm. It is found in the cytoskeleton. The protein localises to the microtubule organizing center. It localises to the centrosome. Functionally, component of the gamma-tubulin ring complex (gTuRC) which mediates microtubule nucleation. The gTuRC regulates the minus-end nucleation of alpha-beta tubulin heterodimers that grow into microtubule protafilaments, a critical step in centrosome duplication and spindle formation. This Mus musculus (Mouse) protein is Gamma-tubulin complex component 6 (Tubgcp6).